We begin with the raw amino-acid sequence, 236 residues long: Small ribosomal subunit protein eS6 (236 aa).

Belongs to the eukaryotic ribosomal protein eS6 family. Component of the small ribosomal subunit. Part of the small subunit (SSU) processome, composed of more than 70 proteins and the RNA chaperone small nucleolar RNA (snoRNA) U3. In terms of processing, ribosomal protein S6 is the major substrate of protein kinases in eukaryote ribosomes.

It is found in the cytoplasm. The protein localises to the nucleus. The protein resides in the nucleolus. Component of the 40S small ribosomal subunit. Plays an important role in controlling cell growth and proliferation through the selective translation of particular classes of mRNA. Part of the small subunit (SSU) processome, first precursor of the small eukaryotic ribosomal subunit. During the assembly of the SSU processome in the nucleolus, many ribosome biogenesis factors, an RNA chaperone and ribosomal proteins associate with the nascent pre-rRNA and work in concert to generate RNA folding, modifications, rearrangements and cleavage as well as targeted degradation of pre-ribosomal RNA by the RNA exosome. The polypeptide is Small ribosomal subunit protein eS6 (rps6) (Dictyostelium discoideum (Social amoeba)).